The primary structure comprises 420 residues: Putative competence-damage inducible protein (420 aa).

Belongs to the CinA family.

This chain is Putative competence-damage inducible protein, found in Halalkalibacterium halodurans (strain ATCC BAA-125 / DSM 18197 / FERM 7344 / JCM 9153 / C-125) (Bacillus halodurans).